A 461-amino-acid polypeptide reads, in one-letter code: Acetylcholine receptor subunit alpha (461 aa).

The signal sequence occupies residues 1 to 24 (MILCSYWHVGLVLLLFSCCGLVLG). The Extracellular segment spans residues 25 to 234 (SEHETRLVAN…ITYHFIMQRI (210 aa)). 2 disulfides stabilise this stretch: cysteine 152–cysteine 166 and cysteine 216–cysteine 217. Residue asparagine 165 is glycosylated (N-linked (GlcNAc...) asparagine). Transmembrane regions (helical) follow at residues 235–259 (PLYF…VFYL), 267–285 (MTLS…LVIV), and 301–320 (YMLF…VVVI). Over 321 to 432 (NTHHRSPSTH…WKYVAMVIDH (112 aa)) the chain is Cytoplasmic. A helical membrane pass occupies residues 433–451 (ILLCVFMLICIIGTVSVFA).

The protein belongs to the ligand-gated ion channel (TC 1.A.9) family. Acetylcholine receptor (TC 1.A.9.1) subfamily. Alpha-1/CHRNA1 sub-subfamily. Pentamer of two alpha chains, and one each of the beta, delta, and gamma chains.

Its subcellular location is the postsynaptic cell membrane. It is found in the cell membrane. The catalysed reaction is K(+)(in) = K(+)(out). It carries out the reaction Na(+)(in) = Na(+)(out). Its function is as follows. Upon acetylcholine binding, the AChR responds by an extensive change in conformation that affects all subunits and leads to opening of an ion-conducting channel across the plasma membrane. The chain is Acetylcholine receptor subunit alpha (CHRNA1) from Torpedo marmorata (Marbled electric ray).